The sequence spans 1139 residues: Retinoblastoma-like protein 2 (1139 aa).

The tract at residues 1 to 45 (MPSGGDQSPPPPPPPPAAAASDEEEEDDGEAEDAAPPAESPTPQI) is disordered. Residues 8 to 17 (SPPPPPPPPA) are compositionally biased toward pro residues. Positions 21–33 (SDEEEEDDGEAED) are enriched in acidic residues. Phosphoserine is present on serine 413. Threonine 417 bears the Phosphothreonine mark. Residues 417-616 (TPVSTATHSL…EKIRDNENRV (200 aa)) form a domain A region. Residues 417–1024 (TPVSTATHSL…KQIKTFAMKY (608 aa)) form a pocket; binds E1A region. O-linked (GlcNAc) serine glycosylation is present at serine 420. The tract at residues 617-827 (PTCEEVMPPQ…KQGQSVTSSS (211 aa)) is spacer. A Phosphoserine modification is found at serine 639. Phosphothreonine is present on threonine 642. The interval 654-678 (GGLGRSITSPTTLYDRYSSPPASTT) is disordered. Phosphoserine occurs at positions 662, 672, and 688. The span at 810-827 (ISPGGQQQKQGQSVTSSS) shows a compositional bias: low complexity. 2 disordered regions span residues 810-831 (ISPG…NRPR) and 933-999 (KGKR…DMEE). The segment at 828–1024 (NRPRKTSSLS…KQIKTFAMKY (197 aa)) is domain B. A compositionally biased stretch (polar residues) spans 941-955 (SGSSDSRSHQNSPTE). Residues serine 948, serine 952, serine 966, serine 971, serine 972, and serine 973 each carry the phosphoserine modification. Residues 964–973 (DSSPVMRSSS) show a composition bias toward low complexity. Phosphothreonine is present on threonine 974. The segment covering 977-987 (VPQPSSAPPTP) has biased composition (pro residues). Phosphoserine occurs at positions 981 and 982. Threonine 986 is subject to Phosphothreonine. 4 positions are modified to phosphoserine: serine 1035, serine 1068, serine 1080, and serine 1112.

The protein belongs to the retinoblastoma protein (RB) family. In terms of assembly, interacts with AATF. Interacts with KMT5B, KMT5C and USP4. Component of the DREAM complex (also named LINC complex) at least composed of E2F4, E2F5, LIN9, LIN37, LIN52, LIN54, MYBL1, MYBL2, RBL1, RBL2, RBBP4, TFDP1 and TFDP2. The complex exists in quiescent cells where it represses cell cycle-dependent genes. It dissociates in S phase when LIN9, LIN37, LIN52 and LIN54 form a subcomplex that binds to MYBL2. Interacts with RINT1. Interacts with PML (isoform PML-1, isoform PML-2, isoform PML-3, isoform PML-4 and isoform PML-5). Interacts with RBBP9. Interacts with CD53. As to quaternary structure, (Microbial infection) Interacts with JC virus small t antigen. In terms of processing, during G0 and early G1 phase of the cell cycle, phosphorylated on Ser-639 and on 5 sites within the domain B. Phosphorylation on Ser-672 in G1 leads to its ubiquitin-dependent proteolysis.

It is found in the nucleus. In terms of biological role, key regulator of entry into cell division. Directly involved in heterochromatin formation by maintaining overall chromatin structure and, in particular, that of constitutive heterochromatin by stabilizing histone methylation. Recruits and targets histone methyltransferases KMT5B and KMT5C, leading to epigenetic transcriptional repression. Controls histone H4 'Lys-20' trimethylation. Probably acts as a transcription repressor by recruiting chromatin-modifying enzymes to promoters. Potent inhibitor of E2F-mediated trans-activation, associates preferentially with E2F5. Binds to cyclins A and E. Binds to and may be involved in the transforming capacity of the adenovirus E1A protein. May act as a tumor suppressor. The polypeptide is Retinoblastoma-like protein 2 (RBL2) (Homo sapiens (Human)).